A 132-amino-acid chain; its full sequence is Small ribosomal subunit protein uS8c (132 aa).

It belongs to the universal ribosomal protein uS8 family. In terms of assembly, part of the 30S ribosomal subunit.

The protein resides in the plastid. Its subcellular location is the chloroplast. Functionally, one of the primary rRNA binding proteins, it binds directly to 16S rRNA central domain where it helps coordinate assembly of the platform of the 30S subunit. The polypeptide is Small ribosomal subunit protein uS8c (rps8) (Cycas taitungensis (Prince sago)).